The chain runs to 1453 residues: Scavenger receptor cysteine-rich type 1 protein M160 (1453 aa).

The signal sequence occupies residues methionine 1–serine 40. At phenylalanine 41–histidine 1359 the chain is on the extracellular side. Residues asparagine 42, asparagine 78, asparagine 120, and asparagine 161 are each glycosylated (N-linked (GlcNAc...) asparagine). SRCR domains are found at residues leucine 48 to tyrosine 148, leucine 155 to tyrosine 255, leucine 262 to serine 362, leucine 369 to serine 469, leucine 476 to serine 576, leucine 583 to serine 683, leucine 690 to serine 790, proline 795 to serine 895, and valine 900 to threonine 1000. 3 cysteine pairs are disulfide-bonded: cysteine 73–cysteine 137, cysteine 86–cysteine 147, and cysteine 117–cysteine 127. 6 disulfide bridges follow: cysteine 180-cysteine 244, cysteine 193-cysteine 254, cysteine 224-cysteine 234, cysteine 287-cysteine 351, cysteine 300-cysteine 361, and cysteine 331-cysteine 341. Residues asparagine 334, asparagine 377, asparagine 441, asparagine 548, and asparagine 637 are each glycosylated (N-linked (GlcNAc...) asparagine). Disulfide bonds link cysteine 394-cysteine 458, cysteine 407-cysteine 468, cysteine 438-cysteine 448, cysteine 501-cysteine 565, cysteine 514-cysteine 575, cysteine 545-cysteine 555, cysteine 608-cysteine 672, cysteine 621-cysteine 682, cysteine 652-cysteine 662, cysteine 715-cysteine 779, cysteine 728-cysteine 789, cysteine 759-cysteine 769, cysteine 820-cysteine 884, cysteine 833-cysteine 894, cysteine 864-cysteine 874, cysteine 925-cysteine 989, cysteine 938-cysteine 999, and cysteine 969-cysteine 979. N-linked (GlcNAc...) asparagine glycosylation is found at asparagine 972, asparagine 1013, asparagine 1084, and asparagine 1104. SRCR domains follow at residues leucine 1036 to serine 1136, leucine 1141 to glutamate 1243, and isoleucine 1246 to serine 1346. Cystine bridges form between cysteine 1061-cysteine 1125, cysteine 1074-cysteine 1135, and cysteine 1105-cysteine 1115. N-linked (GlcNAc...) asparagine glycosylation is found at asparagine 1161 and asparagine 1171. Cystine bridges form between cysteine 1181–cysteine 1242, cysteine 1212–cysteine 1222, cysteine 1271–cysteine 1335, cysteine 1284–cysteine 1345, and cysteine 1315–cysteine 1325. Asparagine 1318 and asparagine 1354 each carry an N-linked (GlcNAc...) asparagine glycan. Residues leucine 1360–leucine 1380 form a helical membrane-spanning segment. Residues threonine 1381–lysine 1453 are Cytoplasmic-facing. Residues glutamate 1418–glutamate 1435 are compositionally biased toward basic and acidic residues. Residues glutamate 1418–lysine 1453 form a disordered region.

Isoform 1 is highly expressed in the spleen, lymph nodes, thymus, and fetal liver and weakly expressed in bone marrow and no expression was found in peripheral blood leukocytes. Isoform 1 expression is restricted to the monocyte and macrophage cell lines. Isoform 2 is only expressed in spleen.

The protein resides in the cell membrane. The protein localises to the secreted. The protein is Scavenger receptor cysteine-rich type 1 protein M160 (CD163L1) of Homo sapiens (Human).